The primary structure comprises 464 residues: Glutamate--tRNA ligase (464 aa).

A 'HIGH' region motif is present at residues 9-19 (PSPTGYLHIGG). The short motif at 242-246 (KISKR) is the 'KMSKS' region element. Lys245 is a binding site for ATP.

This sequence belongs to the class-I aminoacyl-tRNA synthetase family. Glutamate--tRNA ligase type 1 subfamily. As to quaternary structure, monomer.

The protein resides in the cytoplasm. The enzyme catalyses tRNA(Glu) + L-glutamate + ATP = L-glutamyl-tRNA(Glu) + AMP + diphosphate. Its function is as follows. Catalyzes the attachment of glutamate to tRNA(Glu) in a two-step reaction: glutamate is first activated by ATP to form Glu-AMP and then transferred to the acceptor end of tRNA(Glu). This chain is Glutamate--tRNA ligase, found in Neisseria meningitidis serogroup C / serotype 2a (strain ATCC 700532 / DSM 15464 / FAM18).